We begin with the raw amino-acid sequence, 312 residues long: Ornithine carbamoyltransferase (312 aa).

Carbamoyl phosphate contacts are provided by residues 60–63 (STRT), Gln87, Arg111, and 138–141 (HPCQ). L-ornithine-binding positions include Asn169, Asp229, and 233–234 (SM). Residues 268–269 (CL) and Arg296 contribute to the carbamoyl phosphate site.

The protein belongs to the aspartate/ornithine carbamoyltransferase superfamily. OTCase family.

It is found in the cytoplasm. The enzyme catalyses carbamoyl phosphate + L-ornithine = L-citrulline + phosphate + H(+). Its pathway is amino-acid biosynthesis; L-arginine biosynthesis; L-arginine from L-ornithine and carbamoyl phosphate: step 1/3. In terms of biological role, reversibly catalyzes the transfer of the carbamoyl group from carbamoyl phosphate (CP) to the N(epsilon) atom of ornithine (ORN) to produce L-citrulline. The protein is Ornithine carbamoyltransferase of Rhodopseudomonas palustris (strain BisA53).